Consider the following 1052-residue polypeptide: Protein HelA (1052 aa).

13 helical membrane passes run 14–34, 121–141, 348–368, 369–389, 393–413, 450–470, 483–503, 537–557, 878–898, 903–923, 934–954, 979–999, and 1011–1031; these read WFVLLFTLVIAILGVYNFQRL, LPPGVETTLGPISTGLGEIFM, GALLVCVILFLFLGNIRAALI, TAMVIPLSMLLTITGMVENQI, LMSLGALDFGLIVDGAVIIVE, SIFGVFIITVVYLPILTLTGV, IIALLASMLFALTFVPAAVAI, VVISAAVALVVVSLGIAFHLG, LQIVVPITLLGIFLLLFISFG, ALLVFTGIPLALTGGVFALWL, VGFIALSGVAVLNGLVMITFI, PVLMTALVASLGFVPMALATG, and VVIGGIISSTFLTLLVLPGLY.

It belongs to the resistance-nodulation-cell division (RND) (TC 2.A.6) family.

Its subcellular location is the cell inner membrane. Functionally, presumed to function with HelC and HelB in efflux of an unidentified substrate. The sequence is that of Protein HelA (helA) from Legionella pneumophila.